The sequence spans 122 residues: Small ribosomal subunit protein uS13 (122 aa).

Residues 97–122 (PCRGQRTKTNARTRKGPARTVAGKKK) form a disordered region.

It belongs to the universal ribosomal protein uS13 family. In terms of assembly, part of the 30S ribosomal subunit. Forms a loose heterodimer with protein S19. Forms two bridges to the 50S subunit in the 70S ribosome.

Its function is as follows. Located at the top of the head of the 30S subunit, it contacts several helices of the 16S rRNA. In the 70S ribosome it contacts the 23S rRNA (bridge B1a) and protein L5 of the 50S subunit (bridge B1b), connecting the 2 subunits; these bridges are implicated in subunit movement. Contacts the tRNAs in the A and P-sites. In Geobacter sp. (strain M21), this protein is Small ribosomal subunit protein uS13.